Consider the following 152-residue polypeptide: MAVERTFVAIKPDGVQRGLVGEILGRFERKGFKLVGLKQLAPSRELAGEHYGVHRERPFFAGLVDFITSGPVVAMVWEGDGVIASARKLIGATKPLEAEPGTIRGDLAVNIGRNVIHGSDGPDTAQFEINLWFSPEELNAWTPSDQSWRVES.

ATP contacts are provided by Lys-11, Phe-59, Arg-87, Thr-93, Arg-104, and Asn-114. The active-site Pros-phosphohistidine intermediate is the His-117.

This sequence belongs to the NDK family. As to quaternary structure, homotetramer. It depends on Mg(2+) as a cofactor.

The protein resides in the cytoplasm. The catalysed reaction is a 2'-deoxyribonucleoside 5'-diphosphate + ATP = a 2'-deoxyribonucleoside 5'-triphosphate + ADP. It carries out the reaction a ribonucleoside 5'-diphosphate + ATP = a ribonucleoside 5'-triphosphate + ADP. Its function is as follows. Major role in the synthesis of nucleoside triphosphates other than ATP. The ATP gamma phosphate is transferred to the NDP beta phosphate via a ping-pong mechanism, using a phosphorylated active-site intermediate. This is Nucleoside diphosphate kinase from Prochlorococcus marinus (strain MIT 9303).